Here is a 414-residue protein sequence, read N- to C-terminus: CCA-adding enzyme (414 aa).

Gly8 and Arg11 together coordinate ATP. The CTP site is built by Gly8 and Arg11. Mg(2+) contacts are provided by Asp21 and Asp23. Residues Arg92, Arg138, and Arg141 each contribute to the ATP site. CTP-binding residues include Arg92, Arg138, and Arg141.

This sequence belongs to the tRNA nucleotidyltransferase/poly(A) polymerase family. Bacterial CCA-adding enzyme type 2 subfamily. Requires Mg(2+) as cofactor.

It carries out the reaction a tRNA precursor + 2 CTP + ATP = a tRNA with a 3' CCA end + 3 diphosphate. The enzyme catalyses a tRNA with a 3' CCA end + 2 CTP + ATP = a tRNA with a 3' CCACCA end + 3 diphosphate. In terms of biological role, catalyzes the addition and repair of the essential 3'-terminal CCA sequence in tRNAs without using a nucleic acid template. Adds these three nucleotides in the order of C, C, and A to the tRNA nucleotide-73, using CTP and ATP as substrates and producing inorganic pyrophosphate. tRNA 3'-terminal CCA addition is required both for tRNA processing and repair. Also involved in tRNA surveillance by mediating tandem CCA addition to generate a CCACCA at the 3' terminus of unstable tRNAs. While stable tRNAs receive only 3'-terminal CCA, unstable tRNAs are marked with CCACCA and rapidly degraded. The sequence is that of CCA-adding enzyme from Buchnera aphidicola subsp. Cinara cedri (strain Cc).